The following is a 757-amino-acid chain: RNA-directed RNA polymerase catalytic subunit (757 aa).

The segment at 52-82 (KGKWTTNTETGAPQLNPIDGPLPEDNEPSGY) is disordered. The span at 55–64 (WTTNTETGAP) shows a compositional bias: polar residues. Short sequence motifs (nuclear localization signal) lie at residues 187-195 (RKRRVRDNM) and 203-216 (RTIGKKKQRLNKKS). The promoter-binding site stretch occupies residues 249-256 (RGFVYFVE). One can recognise a RdRp catalytic domain in the interval 286 to 483 (VRKMMTNSQD…GINMSKKKSY (198 aa)).

This sequence belongs to the influenza viruses polymerase PB1 family. In terms of assembly, influenza RNA polymerase is composed of three subunits: PB1, PB2 and PA. Interacts (via N-terminus) with PA (via C-terminus). Interacts (via C-terminus) with PB2 (via N-terminus); this interaction is essential for transcription initiation. In terms of processing, phosphorylated by host PRKCA.

The protein localises to the host nucleus. It is found in the host cytoplasm. The catalysed reaction is RNA(n) + a ribonucleoside 5'-triphosphate = RNA(n+1) + diphosphate. RNA-dependent RNA polymerase which is responsible for replication and transcription of virus RNA segments. The transcription of viral mRNAs occurs by a unique mechanism called cap-snatching. 5' methylated caps of cellular mRNAs are cleaved after 10-13 nucleotides by PA. In turn, these short capped RNAs are used as primers by PB1 for transcription of viral mRNAs. During virus replication, PB1 initiates RNA synthesis and copy vRNA into complementary RNA (cRNA) which in turn serves as a template for the production of more vRNAs. The sequence is that of RNA-directed RNA polymerase catalytic subunit from Aves (Cat).